The chain runs to 218 residues: N-(5'-phosphoribosyl)anthranilate isomerase (218 aa).

It belongs to the TrpF family.

The catalysed reaction is N-(5-phospho-beta-D-ribosyl)anthranilate = 1-(2-carboxyphenylamino)-1-deoxy-D-ribulose 5-phosphate. It participates in amino-acid biosynthesis; L-tryptophan biosynthesis; L-tryptophan from chorismate: step 3/5. The polypeptide is N-(5'-phosphoribosyl)anthranilate isomerase (Stenotrophomonas maltophilia (strain K279a)).